Consider the following 167-residue polypeptide: MVLTQHRVPDRPGDPDQDPGRGRRLGIDVGSVRIGVACSDPDAVLATPVETVRRDRSGKHLRRLAALVTELGAVEVVVGLPRTLADRTGTSALDAIDLADQLARRIAPTPVRLADERLTTVAAQRSLRAAGVRAKEQRAVIDQAAAVAILQSWLDQRRAATREAGDG.

A disordered region spans residues 1 to 24 (MVLTQHRVPDRPGDPDQDPGRGRR). Basic and acidic residues predominate over residues 7-21 (RVPDRPGDPDQDPGR).

Belongs to the YqgF nuclease family.

Its subcellular location is the cytoplasm. Functionally, could be a nuclease involved in processing of the 5'-end of pre-16S rRNA. This is Putative pre-16S rRNA nuclease from Mycolicibacterium paratuberculosis (strain ATCC BAA-968 / K-10) (Mycobacterium paratuberculosis).